A 213-amino-acid polypeptide reads, in one-letter code: Glycerol-3-phosphate acyltransferase (213 aa).

Helical transmembrane passes span 3 to 23 (IIIL…GLWI), 48 to 68 (ILGV…GTLA), 71 to 91 (LPLI…LAVI), 119 to 139 (PFFL…FSMI), 144 to 164 (VVAA…GFIL), and 165 to 185 (TSYD…IIFR).

It belongs to the PlsY family. As to quaternary structure, probably interacts with PlsX.

Its subcellular location is the cell membrane. The catalysed reaction is an acyl phosphate + sn-glycerol 3-phosphate = a 1-acyl-sn-glycero-3-phosphate + phosphate. It functions in the pathway lipid metabolism; phospholipid metabolism. Catalyzes the transfer of an acyl group from acyl-phosphate (acyl-PO(4)) to glycerol-3-phosphate (G3P) to form lysophosphatidic acid (LPA). This enzyme utilizes acyl-phosphate as fatty acyl donor, but not acyl-CoA or acyl-ACP. The chain is Glycerol-3-phosphate acyltransferase from Lactococcus lactis subsp. cremoris (strain MG1363).